Here is a 248-residue protein sequence, read N- to C-terminus: MKQIESAKNQKVKDWKKLHTKKERTKTNTFLIEGEHLVEEALKSPGIVKEILVKDETRIPSDLETGIQCYMLSEDAFSAVTETETPQQIAAVCHMPEEKLATARKVLLIDAVQDPGNLGTMIRTADAAGLDAVVLGDGTADAFNGKTLRSAQGSHFHIPVVRRNLPSYVDELKAEGVKVYGTALQNGAPYQEIPQSESFALIVGNEGAGVDAALLEKTDLNLYVPLYGQAESLNVAVAAAILVYHLRG.

Residues R123, G204, V224, and L233 each contribute to the S-adenosyl-L-methionine site.

It belongs to the class IV-like SAM-binding methyltransferase superfamily. RNA methyltransferase TrmH family. Homodimer.

It is found in the cytoplasm. The catalysed reaction is guanosine(2553) in 23S rRNA + S-adenosyl-L-methionine = 2'-O-methylguanosine(2553) in 23S rRNA + S-adenosyl-L-homocysteine + H(+). In terms of biological role, specifically methylates the ribose of guanosine 2553 (G2553) in 23S rRNA. When the target G2553 is mutated, is able to methylate the ribose of adenosine, but it cannot methylate cytidine nor uridine. Modifies free 23S rRNA but not the fully assembled ribosome nor the 50S subunit, suggesting that the modification occurs early during ribosome biogenesis. This Bacillus subtilis (strain 168) protein is 23S rRNA (guanosine(2553)-2'-O)-methyltransferase RlmP.